A 444-amino-acid polypeptide reads, in one-letter code: MRGVIPNYHHSYTLLFFVILVLFPHVFSTNTLSPNEALTISSNKTLVSPGDVFELGFFKTTTRNSPDGTDRWYLGIWYKTTSGHRTYVWVANRDNALHNSMGTLKISHASLVLLDHSNTPVWSTNFTGVAHLPVTAELLANGNFVLRDSKTTALDRFMWQSFDYPVDTLLPEMKLGRNRNGSGNEKILTSWKSPTDPSSGDYSFILETEGFLHEFYLLNNEFKVYRTGPWNGVRFNGIPKMQNWSYIDNSFIDNNKEVAYSFQVNNNHNIHTRFRMSSTGYLQVITWTKTVPQRNMFWSFPEDTCDLYKVCGPYAYCDMHTSPTCNCIKGFVPKNAGRWDLRDMSGGCVRSSKLSCGEGDGFLRMSQMKLPETSEAVVDKRIGLKECREKCVRDCNCTGYANMDIMNGGSGCVMWTGELDDMRKYNAGGQDLYLKVAAASLVPS.

A signal peptide spans 1–28 (MRGVIPNYHHSYTLLFFVILVLFPHVFS). A Bulb-type lectin domain is found at 31–159 (TLSPNEALTI…KTTALDRFMW (129 aa)). N-linked (GlcNAc...) asparagine glycosylation is found at asparagine 43, asparagine 125, asparagine 180, asparagine 243, and asparagine 396. In terms of domain architecture, PAN spans 356–437 (CGEGDGFLRM…GGQDLYLKVA (82 aa)). Intrachain disulfides connect cysteine 387–cysteine 412 and cysteine 395–cysteine 397.

In terms of tissue distribution, stigma.

Functionally, involved in sporophytic self-incompatibility system (the inability of flowering plants to achieve self-fertilization). This is S-locus-specific glycoprotein BS29-1 (SLSG) from Brassica oleracea var. alboglabra (Chinese kale).